Consider the following 478-residue polypeptide: Antiviral innate immune response effector IFIT1 (478 aa).

6 TPR repeats span residues 52 to 85, 95 to 128, 141 to 174, 183 to 216, 218 to 249, and 251 to 284; these read VGIH…MQEE, LVTW…CKKL, IDCE…DPEN, ISAY…NPDN, YIKV…NMSS, and TYVF…TPTS. Tryptophan 147 provides a ligand contact to mRNA. Glycine 190 contacts RNA. RNA-binding residues include lysine 259, histidine 289, glutamine 290, and lysine 336. TPR repeat units lie at residues 305–339, 340–373, 378–412, and 437–470; these read ATKG…KPTF, EVAH…KPVV, QDIH…EQAS, and LESL…AADF.

Belongs to the IFIT family. In terms of assembly, component of an interferon-dependent multiprotein complex, at least composed of IFIT1, IFIT2 and IFIT3. Interacts (via TPR repeats 1-4) with RPL15. Interacts with STING1/MITA; could disrupt STING1 interaction with MAVS or TBK1, acting as a negative-feedback regulator of virus-triggered signaling. Interacts with EIF3E; this could be an alternative way to inhibit translation. In terms of processing, phosphorylated. Post-translationally, ISGylated.

It localises to the cytoplasm. Its function is as follows. Plays a key role in the innate immune response as part of an interferon-dependent multiprotein complex, recognizing and sequestering viral RNAs that lack host-specific 2'-O-methylation at their 5' cap. By distinguishing these RNAs from host mRNAs, inhibits their translation by competing with the translation initiation factor eIF4E. Could also prevent viral replication through its interaction with DNA replication origin-binding protein E1 of several viruses. Causes the translocation of E1 from the nucleus to the cytoplasm and can also inhibit its helicase activity in vitro. Exhibits antiviral activity against many viruses from the Flaviviridae (West Nile virus, Dengue virus, hepatitis C virus), Coronaviridae (human 229E coronavirus, SARS-CoV-2 and SARS-CoV), Poxviridae (vaccinia virus) and Togaviridae (Sindbis virus) families. The sequence is that of Antiviral innate immune response effector IFIT1 from Homo sapiens (Human).